The chain runs to 264 residues: Protein-L-isoaspartate O-methyltransferase (264 aa).

Residues 1 to 49 (MRKPVGSKDGSGVYSRQGLDGYTPANSNTRISTATLPRPEPLRPAASSA) are disordered. Over residues 24–35 (PANSNTRISTAT) the composition is skewed to polar residues. Residue Ser-112 is part of the active site.

This sequence belongs to the methyltransferase superfamily. L-isoaspartyl/D-aspartyl protein methyltransferase family.

It is found in the cytoplasm. The enzyme catalyses [protein]-L-isoaspartate + S-adenosyl-L-methionine = [protein]-L-isoaspartate alpha-methyl ester + S-adenosyl-L-homocysteine. In terms of biological role, catalyzes the methyl esterification of L-isoaspartyl residues in peptides and proteins that result from spontaneous decomposition of normal L-aspartyl and L-asparaginyl residues. It plays a role in the repair and/or degradation of damaged proteins. The chain is Protein-L-isoaspartate O-methyltransferase from Bordetella avium (strain 197N).